Here is a 178-residue protein sequence, read N- to C-terminus: Co-chaperone protein p23-1 (178 aa).

The region spanning 2-91 (SRHPTVKWAQ…AESKWWNRLT (90 aa)) is the CS domain. 2 stretches are compositionally biased toward acidic residues: residues 112 to 126 (DDED…DFGD) and 136 to 155 (DTDE…EGET). Residues 112-178 (DDEDKGGEGD…DEEGVNAKKD (67 aa)) are disordered. Over residues 157–178 (AETKEKKIDGEKDEEGVNAKKD) the composition is skewed to basic and acidic residues.

It belongs to the p23/wos2 family. Interacts with HSP90 in an ATP-dependent manner.

In terms of biological role, acts as a co-chaperone for HSP90. The polypeptide is Co-chaperone protein p23-1 (Brassica napus (Rape)).